Here is a 161-residue protein sequence, read N- to C-terminus: Putative pre-16S rRNA nuclease (161 aa).

It belongs to the YqgF nuclease family.

It localises to the cytoplasm. In terms of biological role, could be a nuclease involved in processing of the 5'-end of pre-16S rRNA. The chain is Putative pre-16S rRNA nuclease from Bartonella bacilliformis (strain ATCC 35685 / KC583 / Herrer 020/F12,63).